Here is a 169-residue protein sequence, read N- to C-terminus: Protein ORFb in retron Ec67 (169 aa).

In Escherichia coli, this protein is Protein ORFb in retron Ec67.